A 119-amino-acid chain; its full sequence is Large ribosomal subunit protein bL20 (119 aa).

It belongs to the bacterial ribosomal protein bL20 family.

Functionally, binds directly to 23S ribosomal RNA and is necessary for the in vitro assembly process of the 50S ribosomal subunit. It is not involved in the protein synthesizing functions of that subunit. This is Large ribosomal subunit protein bL20 from Streptococcus uberis (strain ATCC BAA-854 / 0140J).